A 248-amino-acid chain; its full sequence is Proteasome subunit alpha (248 aa).

It belongs to the peptidase T1A family. As to quaternary structure, the 20S proteasome core is composed of 14 alpha and 14 beta subunits that assemble into four stacked heptameric rings, resulting in a barrel-shaped structure. The two inner rings, each composed of seven catalytic beta subunits, are sandwiched by two outer rings, each composed of seven alpha subunits. The catalytic chamber with the active sites is on the inside of the barrel. Has a gated structure, the ends of the cylinder being occluded by the N-termini of the alpha-subunits. Is capped by the proteasome-associated ATPase, ARC.

It localises to the cytoplasm. Its pathway is protein degradation; proteasomal Pup-dependent pathway. The formation of the proteasomal ATPase ARC-20S proteasome complex, likely via the docking of the C-termini of ARC into the intersubunit pockets in the alpha-rings, may trigger opening of the gate for substrate entry. Interconversion between the open-gate and close-gate conformations leads to a dynamic regulation of the 20S proteasome proteolysis activity. Component of the proteasome core, a large protease complex with broad specificity involved in protein degradation. This is Proteasome subunit alpha from Mycobacterium bovis (strain BCG / Pasteur 1173P2).